Consider the following 208-residue polypeptide: N-(5'-phosphoribosyl)anthranilate isomerase (208 aa).

This sequence belongs to the TrpF family.

The enzyme catalyses N-(5-phospho-beta-D-ribosyl)anthranilate = 1-(2-carboxyphenylamino)-1-deoxy-D-ribulose 5-phosphate. The protein operates within amino-acid biosynthesis; L-tryptophan biosynthesis; L-tryptophan from chorismate: step 3/5. The sequence is that of N-(5'-phosphoribosyl)anthranilate isomerase from Nitrosospira multiformis (strain ATCC 25196 / NCIMB 11849 / C 71).